Reading from the N-terminus, the 65-residue chain is Large ribosomal subunit protein bL35 (65 aa).

It belongs to the bacterial ribosomal protein bL35 family.

In Laribacter hongkongensis (strain HLHK9), this protein is Large ribosomal subunit protein bL35.